A 510-amino-acid chain; its full sequence is Light-independent protochlorophyllide reductase subunit B (510 aa).

Asp36 is a binding site for [4Fe-4S] cluster. Residue Asp296 is the Proton donor of the active site. A substrate-binding site is contributed by 431–432 (GM).

It belongs to the ChlB/BchB/BchZ family. Protochlorophyllide reductase is composed of three subunits; ChlL, ChlN and ChlB. Forms a heterotetramer of two ChlB and two ChlN subunits. The cofactor is [4Fe-4S] cluster.

It carries out the reaction chlorophyllide a + oxidized 2[4Fe-4S]-[ferredoxin] + 2 ADP + 2 phosphate = protochlorophyllide a + reduced 2[4Fe-4S]-[ferredoxin] + 2 ATP + 2 H2O. It functions in the pathway porphyrin-containing compound metabolism; chlorophyll biosynthesis (light-independent). Component of the dark-operative protochlorophyllide reductase (DPOR) that uses Mg-ATP and reduced ferredoxin to reduce ring D of protochlorophyllide (Pchlide) to form chlorophyllide a (Chlide). This reaction is light-independent. The NB-protein (ChlN-ChlB) is the catalytic component of the complex. This chain is Light-independent protochlorophyllide reductase subunit B, found in Synechococcus sp. (strain JA-2-3B'a(2-13)) (Cyanobacteria bacterium Yellowstone B-Prime).